A 412-amino-acid polypeptide reads, in one-letter code: 3,4-dihydroxybenzoate--[aryl-carrier protein] ligase (412 aa).

It belongs to the ATP-dependent AMP-binding enzyme family.

It catalyses the reaction holo-[aryl-carrier protein] + 3,4-dihydroxybenzoate + ATP = 3,4-dihydroxybenzoyl-[aryl-carrier protein] + AMP + diphosphate. The catalysed reaction is 3,4-dihydroxybenzoate + ATP + H(+) = 3,4-dihydroxybenzoyl-5'-AMP + diphosphate. The enzyme catalyses 3,4-dihydroxybenzoyl-5'-AMP + holo-[aryl-carrier protein] = 3,4-dihydroxybenzoyl-[aryl-carrier protein] + AMP + H(+). It functions in the pathway siderophore biosynthesis; petrobactin biosynthesis. ATP-pyrophosphate exchange is inhibited in vitro by nonhydrolyzable acylsulfamate analogs that mimic the AsbC-bound intermediate 3,4-dihydroxybenzoyl-AMP. Functionally, involved in the biosynthesis of petrobactin, a catecholate siderophore that functions in both iron acquisition and virulence. Catalyzes the adenylation of 3,4-dihydroxybenzoate (3,4-DHBA) to the corresponding AMP ester, followed by the transfer of the activated unit to the phosphopantetheine thiol of the aryl-carrier protein AsbD. The protein is 3,4-dihydroxybenzoate--[aryl-carrier protein] ligase of Bacillus anthracis.